A 267-amino-acid polypeptide reads, in one-letter code: Undecaprenyl-diphosphatase (267 aa).

8 helical membrane-spanning segments follow: residues 1–21 (MTYF…FLPI), 39–59 (QGLA…VMYF), 87–107 (WLII…KDFI), 111–131 (LRSA…LWWV), 149–169 (ALFL…RSGI), 189–209 (FLMS…KLAL), 218–238 (FLGT…HFFL), and 246–266 (MTPF…WLAL).

Belongs to the UppP family.

Its subcellular location is the cell inner membrane. The enzyme catalyses di-trans,octa-cis-undecaprenyl diphosphate + H2O = di-trans,octa-cis-undecaprenyl phosphate + phosphate + H(+). Its function is as follows. Catalyzes the dephosphorylation of undecaprenyl diphosphate (UPP). Confers resistance to bacitracin. This chain is Undecaprenyl-diphosphatase, found in Aliivibrio salmonicida (strain LFI1238) (Vibrio salmonicida (strain LFI1238)).